Reading from the N-terminus, the 130-residue chain is Small ribosomal subunit protein uS9 (130 aa).

This sequence belongs to the universal ribosomal protein uS9 family.

The protein is Small ribosomal subunit protein uS9 of Cupriavidus metallidurans (strain ATCC 43123 / DSM 2839 / NBRC 102507 / CH34) (Ralstonia metallidurans).